Here is a 968-residue protein sequence, read N- to C-terminus: MPFTLGQRWISDTESELGLGTVVALDARMVTLLFPAIGENRLYSRNDSPITRVMFNPGDTITSHEGWQLHVDKVNEENGLLSYTGTRLDTQEANVTLREVLLDSKLVFSKPQDRLFAGQIDRMDRFALRYRARKFQSEQYRMPWSGLRGQRTSLIPHQLNIAHDVGRRHAPRVLLADEVGLGKTIEAGMILHQQLLSGAAERVLIVVPETLQHQWLVEMLRRFNLRFSLFDDERYAEAQHDAYNPFETEQLVICSLDFVRRSKQRLEHLCDAEWDLMVVDEAHHLVWSEEAPSREYQAIEQLAERVPGILLLTATPEQLGMESHFARLRLLDPNRFHDFAQFVEEQQNYRPVADAVALLLAGNTLSDSELNTLGDLIGEQDIEPLLQAANSDREDAQAARQELVSMLMDRHGTSRVLFRNTRNGVKGFPKRELHTIRLPLPTQYQTAIKVSGIMGARKTAEERARDMLYPEQIYQEFEGDTGTWWNFDPRVEWLMGYLTSHRSQKVLVICAKAATALQLEQVLREREGIRAAVFHEGMSIIERDRAAAWFAEEDTGAQVLLCSEIGSEGRNFQFASNLVMFDLPFNPDLLEQRIGRLDRIGQAHDIQIHVPYLEKTAQSVLVRWYHEGLDAFEHTCPTGRTVYDSVHDELINYLAAPESTDGFDDLIKSCRQQHDALKAQLEQGRDRLLEIHSNGGEKAQALAESIEEQDDDTSLIAFSMNLFDIVGINQDDRGENLIVLTPSDHMLVPDFPGLPEDGCTITFERDVALSREDAQFITWEHPLIRNGLDLILSGDTGSSTISLLKNKALPVGTLLLELIYVVEAQAPKQLQLNRFLPATPVRLLLDKNGNNLAGQVEFESFNRQLSAVNRHTGSKLVNAVQQDVHAILQQGEAQIAKAALGLIDAARNEADEKLTAELSRLEALKAVNPNIRDDELAAIESNRQQVMDALAQAGWRLDALRLIVVTHQ.

In terms of domain architecture, Helicase ATP-binding spans 164–334; that stretch reads DVGRRHAPRV…FARLRLLDPN (171 aa). 177-184 contributes to the ATP binding site; sequence DEVGLGKT. A DEAH box motif is present at residues 280–283; that stretch reads DEAH. The 155-residue stretch at 490–644 folds into the Helicase C-terminal domain; sequence RVEWLMGYLT…TCPTGRTVYD (155 aa).

It belongs to the SNF2/RAD54 helicase family. RapA subfamily. As to quaternary structure, interacts with the RNAP. Has a higher affinity for the core RNAP than for the holoenzyme. Its ATPase activity is stimulated by binding to RNAP.

Transcription regulator that activates transcription by stimulating RNA polymerase (RNAP) recycling in case of stress conditions such as supercoiled DNA or high salt concentrations. Probably acts by releasing the RNAP, when it is trapped or immobilized on tightly supercoiled DNA. Does not activate transcription on linear DNA. Probably not involved in DNA repair. This chain is RNA polymerase-associated protein RapA, found in Klebsiella pneumoniae (strain 342).